The sequence spans 313 residues: Pyrimidine-specific ribonucleoside hydrolase RihB (313 aa).

Residue Asp-11 is the Proton acceptor of the active site. Ca(2+)-binding residues include Asp-11, Asp-16, and Val-124. Residues Gln-227 and His-239 each coordinate substrate. Ca(2+) is bound at residue Asp-240.

The protein belongs to the IUNH family. RihB subfamily. As to quaternary structure, homotetramer. Requires Ca(2+) as cofactor.

It carries out the reaction a pyrimidine ribonucleoside + H2O = a pyrimidine nucleobase + D-ribose. Functionally, hydrolyzes cytidine or uridine to ribose and cytosine or uracil, respectively. Has a clear preference for cytidine over uridine. Strictly specific for ribonucleosides. This is Pyrimidine-specific ribonucleoside hydrolase RihB from Escherichia coli (strain SMS-3-5 / SECEC).